Reading from the N-terminus, the 139-residue chain is Putative pre-16S rRNA nuclease (139 aa).

Belongs to the YqgF nuclease family.

It localises to the cytoplasm. Functionally, could be a nuclease involved in processing of the 5'-end of pre-16S rRNA. This chain is Putative pre-16S rRNA nuclease, found in Streptococcus pyogenes serotype M1.